Here is a 161-residue protein sequence, read N- to C-terminus: Nucleotide-binding protein BMASAVP1_A0673 (161 aa).

Belongs to the YajQ family.

In terms of biological role, nucleotide-binding protein. The polypeptide is Nucleotide-binding protein BMASAVP1_A0673 (Burkholderia mallei (strain SAVP1)).